An 833-amino-acid chain; its full sequence is Leucine--tRNA ligase (833 aa).

The short motif at 41-52 is the 'HIGH' region element; it reads PYPSGAGLHVGH. A 'KMSKS' region motif is present at residues 610-614; sequence KMSKS. K613 is an ATP binding site.

This sequence belongs to the class-I aminoacyl-tRNA synthetase family.

It localises to the cytoplasm. The catalysed reaction is tRNA(Leu) + L-leucine + ATP = L-leucyl-tRNA(Leu) + AMP + diphosphate. This chain is Leucine--tRNA ligase, found in Streptococcus pyogenes serotype M6 (strain ATCC BAA-946 / MGAS10394).